A 40-amino-acid chain; its full sequence is Protamine-2 (40 aa).

The disordered stretch occupies residues 1–40; it reads MPPRRKRVSSAPRRRRRTYRRTTAHKHQERPVHRRRRRRH.

As to expression, testis.

It is found in the nucleus. Its subcellular location is the chromosome. In terms of biological role, protamines substitute for histones in the chromatin of sperm during the haploid phase of spermatogenesis. They compact sperm DNA into a highly condensed, stable and inactive complex. The protein is Protamine-2 (PBP2) of Bufo japonicus (Japanese common toad).